Consider the following 267-residue polypeptide: Orotidine 5'-phosphate decarboxylase (267 aa).

Lys-93 acts as the Proton donor in catalysis.

Belongs to the OMP decarboxylase family. Type 2 subfamily.

It catalyses the reaction orotidine 5'-phosphate + H(+) = UMP + CO2. Its pathway is pyrimidine metabolism; UMP biosynthesis via de novo pathway; UMP from orotate: step 2/2. This is Orotidine 5'-phosphate decarboxylase from Halobacterium salinarum (strain ATCC 29341 / DSM 671 / R1).